The primary structure comprises 309 residues: Homoserine O-acetyltransferase (309 aa).

The active-site Acyl-thioester intermediate is cysteine 142. Positions 163 and 192 each coordinate substrate. The active-site Proton acceptor is the histidine 235. Glutamate 237 is a catalytic residue. Arginine 249 serves as a coordination point for substrate.

This sequence belongs to the MetA family.

The protein resides in the cytoplasm. It carries out the reaction L-homoserine + acetyl-CoA = O-acetyl-L-homoserine + CoA. It participates in amino-acid biosynthesis; L-methionine biosynthesis via de novo pathway; O-acetyl-L-homoserine from L-homoserine: step 1/1. In terms of biological role, transfers an acetyl group from acetyl-CoA to L-homoserine, forming acetyl-L-homoserine. The polypeptide is Homoserine O-acetyltransferase (Methanomethylophilus alvi (strain Mx1201)).